The sequence spans 297 residues: MTTPRNSMSGTLPVDPMKSPTAMYPVQKIIPKRMPSVVGPTQNFFMRESKTLGAVQIMNGLFHIALGSLLMIHTDVCAPICITMWYPLWGGIMFIISGSLLAAADKNPRKSLVKGKMIMNSLSLFAAISGIIFLIMDIFNITISHFFKMENLNLIKAPMPYVDIHNCDPANPSEKNSLSIQYCGSIRSVFLGVFAVMLIFAFFQKLVTAGIVENEWKKLCSKPKSDVVVLLAAEEKKEQPIETTEEMVELTEIASQPKKEEDIEIIPVQEEEGELEINFAEPPQEQESSPIENDSIP.

The Cytoplasmic portion of the chain corresponds to 1–51 (MTTPRNSMSGTLPVDPMKSPTAMYPVQKIIPKRMPSVVGPTQNFFMRESKT). Ser36 is subject to Phosphoserine. The helical transmembrane segment at 52-72 (LGAVQIMNGLFHIALGSLLMI) threads the bilayer. Over 73–75 (HTD) the chain is Extracellular. A helical transmembrane segment spans residues 76–96 (VCAPICITMWYPLWGGIMFII). Residues 97 to 122 (SGSLLAAADKNPRKSLVKGKMIMNSL) lie on the Cytoplasmic side of the membrane. The chain crosses the membrane as a helical span at residues 123–143 (SLFAAISGIIFLIMDIFNITI). The Extracellular portion of the chain corresponds to 144 to 188 (SHFFKMENLNLIKAPMPYVDIHNCDPANPSEKNSLSIQYCGSIRS). Residues 189-209 (VFLGVFAVMLIFAFFQKLVTA) traverse the membrane as a helical segment. Residues 210–297 (GIVENEWKKL…SSPIENDSIP (88 aa)) lie on the Cytoplasmic side of the membrane. Cys220 carries S-palmitoyl cysteine lipidation. Ser225 is modified (phosphoserine). The interval 274 to 297 (ELEINFAEPPQEQESSPIENDSIP) is disordered. Low complexity predominate over residues 281-290 (EPPQEQESSP).

The protein belongs to the MS4A family. In terms of assembly, forms homotetramers. Interacts with the heavy and light chains of cell surface IgM, the antigen-binding components of the BCR. Phosphorylated. Might be functionally regulated by protein kinase(s). In terms of tissue distribution, expressed in PBMCs and lymph node from healthy dogs, in B-cells of canine lymphoma, but not in T-cell lymphoma cells and non-T and non-B-cell lymphoma cells.

It localises to the cell membrane. B-lymphocyte-specific membrane protein that plays a role in the regulation of cellular calcium influx necessary for the development, differentiation, and activation of B-lymphocytes. Functions as a store-operated calcium (SOC) channel component promoting calcium influx after activation by the B-cell receptor/BCR. This chain is B-lymphocyte antigen CD20 (MS4A1), found in Canis lupus familiaris (Dog).